The following is an 870-amino-acid chain: DNA polymerase kappa (870 aa).

A UmuC domain is found at Ile103–Gly358. The Mg(2+) site is built by Asp107, Asp198, and Glu199. 2 consecutive UBZ4-type zinc fingers follow at residues Ile621–Ser651 and Ala776–Phe806. Cys624, Cys627, His642, Cys646, Cys779, Cys782, His797, and Cys801 together coordinate Zn(2+). The segment at Asn816–Pro858 is disordered.

It belongs to the DNA polymerase type-Y family. In terms of assembly, interacts with REV1. Interacts with PCNA. Requires Mg(2+) as cofactor. Mn(2+) serves as cofactor. Detected at low levels in testis, spleen, prostate and ovary. Detected at very low levels in kidney, colon, brain, heart, liver, lung, placenta, pancreas and peripheral blood leukocytes.

The protein resides in the nucleus. The enzyme catalyses DNA(n) + a 2'-deoxyribonucleoside 5'-triphosphate = DNA(n+1) + diphosphate. In terms of biological role, DNA polymerase specifically involved in DNA repair. Plays an important role in translesion synthesis, where the normal high-fidelity DNA polymerases cannot proceed and DNA synthesis stalls. Depending on the context, it inserts the correct base, but causes frequent base transitions, transversions and frameshifts. Lacks 3'-5' proofreading exonuclease activity. Forms a Schiff base with 5'-deoxyribose phosphate at abasic sites, but does not have lyase activity. This chain is DNA polymerase kappa (POLK), found in Homo sapiens (Human).